The following is an 81-amino-acid chain: A-kinase anchor protein 7 isoform alpha (81 aa).

Gly2 carries N-myristoyl glycine lipidation. The segment at 2-11 (GQLCCFPFAR) is required for membrane localization. S-palmitoyl cysteine attachment occurs at residues Cys5 and Cys6. Positions 29-42 (LVRLSKRLVENAVL) are RII-binding. The tract at residues 49 to 81 (LEETQNKKQPGEGNSTKAEEGDRNGDGSDNNRK) is disordered. Basic and acidic residues predominate over residues 65-81 (KAEEGDRNGDGSDNNRK).

Binds cAMP-dependent protein kinase (PKA). Interacts with PRKCA; only the cytoplasmic form is capable of interacting with PRKCA.

The protein resides in the lateral cell membrane. Its function is as follows. Targets the cAMP-dependent protein kinase (PKA) to the plasma membrane, and permits functional coupling to the L-type calcium channel. The membrane-associated form reduces epithelial sodium channel (ENaC) activity, whereas the free cytoplasmic form may negatively regulate ENaC channel feedback inhibition by intracellular sodium. This Mus musculus (Mouse) protein is A-kinase anchor protein 7 isoform alpha (Akap7).